Reading from the N-terminus, the 341-residue chain is HTH-type transcriptional repressor PurR (341 aa).

One can recognise an HTH lacI-type domain in the interval 2–56 (ATIKDVAKRANVSTTTVSHVINKTRFVAEETRNAVWAAIKELHYSPSAVARSLKV). A DNA-binding region (H-T-H motif) is located at residues 4-23 (IKDVAKRANVSTTTVSHVIN). A DNA-binding region spans residues 48–56 (SAVARSLKV). Hypoxanthine contacts are provided by Tyr-73, Arg-190, Thr-192, Phe-221, and Asp-275.

Homodimer.

Its pathway is purine metabolism; purine nucleotide biosynthesis [regulation]. Its function is as follows. Is the main repressor of the genes involved in the de novo synthesis of purine nucleotides, regulating purB, purC, purEK, purF, purHD, purL, purMN and guaBA expression. In addition, it participates in the regulation or coregulation of genes involved in de novo pyrimidine nucleotide biosynthesis, salvage and uptake (pyrC, pyrD, carAB and codBA), and of several genes encoding enzymes necessary for nucleotide and polyamine biosynthesis (prsA, glyA, gcvTHP, speA, glnB). Binds to a 16-bp palindromic sequence located within the promoter region of pur regulon genes. The consensus binding sequence is 5'-ACGCAAACGTTTTCNT-3'. PurR is allosterically activated to bind its cognate DNA by binding the purine corepressors, hypoxanthine or guanine, thereby effecting transcription repression. This is HTH-type transcriptional repressor PurR (purR) from Escherichia coli (strain K12).